Reading from the N-terminus, the 356-residue chain is DNA polymerase IV (356 aa).

Positions 7 to 188 (IIHIDMDAFY…IPVTKFYGVG (182 aa)) constitute a UmuC domain. Positions 11 and 106 each coordinate Mg(2+). Residue Glu-107 is part of the active site.

Belongs to the DNA polymerase type-Y family. As to quaternary structure, monomer. Mg(2+) serves as cofactor.

Its subcellular location is the cytoplasm. The enzyme catalyses DNA(n) + a 2'-deoxyribonucleoside 5'-triphosphate = DNA(n+1) + diphosphate. Functionally, poorly processive, error-prone DNA polymerase involved in untargeted mutagenesis. Copies undamaged DNA at stalled replication forks, which arise in vivo from mismatched or misaligned primer ends. These misaligned primers can be extended by PolIV. Exhibits no 3'-5' exonuclease (proofreading) activity. May be involved in translesional synthesis, in conjunction with the beta clamp from PolIII. The protein is DNA polymerase IV of Listeria monocytogenes serotype 4b (strain CLIP80459).